The sequence spans 341 residues: Putative UPF0607 protein ENSP00000381514 (341 aa).

Over residues 78 to 89 (AEEPKEATEVKD) the composition is skewed to basic and acidic residues. 2 disordered regions span residues 78–131 (AEEP…NPRP) and 216–282 (GLLT…KLPC). Polar residues predominate over residues 108 to 127 (EAASTSRPLETQGNLTSSWY). The span at 243 to 252 (AGHRSRKRKL) shows a compositional bias: basic residues.

The protein belongs to the UPF0607 family.

The polypeptide is Putative UPF0607 protein ENSP00000381514 (Homo sapiens (Human)).